Consider the following 273-residue polypeptide: Tyrosinase (273 aa).

Histidine 37, histidine 53, histidine 62, histidine 189, histidine 193, and histidine 215 together coordinate Cu cation.

Belongs to the tyrosinase family. Requires Cu(2+) as cofactor.

The enzyme catalyses 2 L-dopa + O2 = 2 L-dopaquinone + 2 H2O. The catalysed reaction is L-tyrosine + O2 = L-dopaquinone + H2O. In terms of biological role, this is a copper-containing oxidase that functions in the formation of pigments such as melanins and other polyphenolic compounds. The chain is Tyrosinase (melC2) from Streptomyces lincolnensis.